Consider the following 159-residue polypeptide: Probable chemoreceptor glutamine deamidase CheD 1 (159 aa).

It belongs to the CheD family.

The catalysed reaction is L-glutaminyl-[protein] + H2O = L-glutamyl-[protein] + NH4(+). Probably deamidates glutamine residues to glutamate on methyl-accepting chemotaxis receptors (MCPs), playing an important role in chemotaxis. This chain is Probable chemoreceptor glutamine deamidase CheD 1, found in Methanosarcina acetivorans (strain ATCC 35395 / DSM 2834 / JCM 12185 / C2A).